The chain runs to 183 residues: uncharacterized protein (183 aa).

Residues 55 to 183 (PRAAVLLVDL…RSRRGSRPAR (129 aa)) enclose the GGDEF domain.

Functionally, might be involved in pSAM2 replication control. This is an uncharacterized protein from Streptomyces ambofaciens.